A 147-amino-acid chain; its full sequence is UPF0306 protein YhbP (147 aa).

It belongs to the UPF0306 family.

This is UPF0306 protein YhbP from Escherichia fergusonii (strain ATCC 35469 / DSM 13698 / CCUG 18766 / IAM 14443 / JCM 21226 / LMG 7866 / NBRC 102419 / NCTC 12128 / CDC 0568-73).